The chain runs to 90 residues: UPF0213 protein lmo0166 (90 aa).

Positions 5-80 (SEHFFYVLKC…KKLSRKNKDA (76 aa)) constitute a GIY-YIG domain.

It belongs to the UPF0213 family.

The protein is UPF0213 protein lmo0166 of Listeria monocytogenes serovar 1/2a (strain ATCC BAA-679 / EGD-e).